The chain runs to 122 residues: Small ribosomal subunit protein uS13 (122 aa).

The tract at residues Arg93 to Lys122 is disordered.

Belongs to the universal ribosomal protein uS13 family. Part of the 30S ribosomal subunit. Forms a loose heterodimer with protein S19. Forms two bridges to the 50S subunit in the 70S ribosome.

Its function is as follows. Located at the top of the head of the 30S subunit, it contacts several helices of the 16S rRNA. In the 70S ribosome it contacts the 23S rRNA (bridge B1a) and protein L5 of the 50S subunit (bridge B1b), connecting the 2 subunits; these bridges are implicated in subunit movement. Contacts the tRNAs in the A and P-sites. In Corynebacterium urealyticum (strain ATCC 43042 / DSM 7109), this protein is Small ribosomal subunit protein uS13.